A 523-amino-acid polypeptide reads, in one-letter code: REST corepressor 2 (523 aa).

A disordered region spans residues 1 to 43 (MPSVMEKPSAGSGILSRSRAKTAPNGGQPHSEDDSSEEEHSHD). The span at 30–43 (HSEDDSSEEEHSHD) shows a compositional bias: basic and acidic residues. A phosphoserine mark is found at serine 31, serine 35, serine 36, and serine 63. Residues 44-129 (SMIRVGTNYQ…KSLADLANFT (86 aa)) form the ELM2 domain. Residue lysine 88 forms a Glycyl lysine isopeptide (Lys-Gly) (interchain with G-Cter in SUMO2) linkage. The SANT 1 domain maps to 130–181 (PFPDEWTVEDKVLFEQAFGFHGKCFQRIQQMLPDKVIPSLVKYYYSWKKTRS). The tract at residues 185–244 (VMDRQARRLGGRKDKEDSDELEEGRGAVSEGEPDTGDPKREPLPSRPLNARPGPGKKEVQ) is disordered. Phosphoserine is present on serine 202. Positions 283–314 (TLRGLDSQLISLKRQVQSMKQTNSSLRQALEG) form a coiled coil. In terms of domain architecture, SANT 2 spans 327-378 (KFNSRWTTDEQLLAVQAIRRYGKDFGAIAEVIGNKTLTQVKTFFVSYRRRFN). The disordered stretch occupies residues 387-523 (EAEQDGAPAA…APLEPPAPSL (137 aa)). Residues 432 to 459 (SVPPAPPPPPPPTSLSQPPPLLRPPLPT) show a composition bias toward pro residues. Residues 460–482 (APTLLRQPPPLQQGRFLQPRLAP) show a composition bias toward low complexity. Position 479 is an asymmetric dimethylarginine (arginine 479). Over residues 504–523 (GPQPPPTLVGAPLEPPAPSL) the composition is skewed to pro residues.

It belongs to the CoREST family. Predominantly, but not exclusively, expressed in neural tissue. Strongly expressed in neural domains of the developing brain of the developing mouse CNS.

The protein resides in the nucleus. Functionally, may act as a component of a corepressor complex that represses transcription. The sequence is that of REST corepressor 2 (Rcor2) from Mus musculus (Mouse).